The chain runs to 269 residues: GTP cyclohydrolase FolE2 (269 aa).

Belongs to the GTP cyclohydrolase IV family.

The catalysed reaction is GTP + H2O = 7,8-dihydroneopterin 3'-triphosphate + formate + H(+). Its pathway is cofactor biosynthesis; 7,8-dihydroneopterin triphosphate biosynthesis; 7,8-dihydroneopterin triphosphate from GTP: step 1/1. Converts GTP to 7,8-dihydroneopterin triphosphate. This Thiobacillus denitrificans (strain ATCC 25259 / T1) protein is GTP cyclohydrolase FolE2.